Consider the following 505-residue polypeptide: Trans-cinnamate 4-monooxygenase C4H2 (505 aa).

2 short sequence motifs (nuclear localization signal) span residues 161 to 168 (VKKMKESN) and 247 to 254 (EKRLKLFK). Cysteine 447 is a heme binding site.

This sequence belongs to the cytochrome P450 family. Heme serves as cofactor.

It localises to the nucleus. The catalysed reaction is (E)-cinnamate + reduced [NADPH--hemoprotein reductase] + O2 = (E)-4-coumarate + oxidized [NADPH--hemoprotein reductase] + H2O + H(+). It participates in phenylpropanoid metabolism; trans-4-coumarate biosynthesis; trans-4-coumarate from trans-cinnamate: step 1/1. Functionally, component of the floral volatile benzenoid/phenylpropanoid (FVBP) biosynthetic pathway that controls carbon flux to pigments essential for pollination or UV protection, to numerous pytoalexins synthesized by plants when challenged by pathogens, and to lignins. This is Trans-cinnamate 4-monooxygenase C4H2 from Petunia hybrida (Petunia).